The sequence spans 266 residues: Phosphatidylglycerol--prolipoprotein diacylglyceryl transferase (266 aa).

7 consecutive transmembrane segments (helical) span residues 10-30 (VAIA…LVGI), 56-76 (LVFW…VFFY), 92-112 (WEGG…TWWF), 120-140 (FFEL…AGRI), 172-192 (PSQL…LWFY), 200-220 (MAVS…VEFV), and 234-254 (WLTM…GLIA). Residue arginine 139 coordinates a 1,2-diacyl-sn-glycero-3-phospho-(1'-sn-glycerol).

It belongs to the Lgt family.

It is found in the cell inner membrane. It carries out the reaction L-cysteinyl-[prolipoprotein] + a 1,2-diacyl-sn-glycero-3-phospho-(1'-sn-glycerol) = an S-1,2-diacyl-sn-glyceryl-L-cysteinyl-[prolipoprotein] + sn-glycerol 1-phosphate + H(+). It functions in the pathway protein modification; lipoprotein biosynthesis (diacylglyceryl transfer). Functionally, catalyzes the transfer of the diacylglyceryl group from phosphatidylglycerol to the sulfhydryl group of the N-terminal cysteine of a prolipoprotein, the first step in the formation of mature lipoproteins. This Ectopseudomonas mendocina (strain ymp) (Pseudomonas mendocina) protein is Phosphatidylglycerol--prolipoprotein diacylglyceryl transferase.